Consider the following 640-residue polypeptide: Probable potassium transport system protein Kup 1 (640 aa).

A run of 12 helical transmembrane segments spans residues 24–44 (LGAL…TSPL), 67–87 (IASL…VLFV), 116–136 (VGPL…DGMI), 154–174 (PFFA…LFTI), 186–206 (FGPV…TEVV), 222–242 (TFLF…VLAV), 264–284 (WFAL…ALIL), 296–316 (MLVP…ATVI), 354–374 (IYIP…VVGF), 382–402 (AAYG…ALVV), 411–431 (LWLC…FLGA), and 436–456 (VTQG…LMAT).

This sequence belongs to the HAK/KUP transporter (TC 2.A.72) family.

Its subcellular location is the cell inner membrane. It carries out the reaction K(+)(in) + H(+)(in) = K(+)(out) + H(+)(out). Its function is as follows. Transport of potassium into the cell. Likely operates as a K(+):H(+) symporter. The sequence is that of Probable potassium transport system protein Kup 1 from Paramagnetospirillum magneticum (strain ATCC 700264 / AMB-1) (Magnetospirillum magneticum).